Reading from the N-terminus, the 88-residue chain is Small ribosomal subunit protein bS20 (88 aa).

Residues 1-25 form a disordered region; the sequence is MANTAQALKRIRQTNKARAQNASQR. The span at 16-25 shows a compositional bias: polar residues; the sequence is KARAQNASQR.

It belongs to the bacterial ribosomal protein bS20 family.

In terms of biological role, binds directly to 16S ribosomal RNA. This is Small ribosomal subunit protein bS20 from Dichelobacter nodosus (strain VCS1703A).